Here is a 480-residue protein sequence, read N- to C-terminus: Serine carboxypeptidase-like 35 (480 aa).

Residues methionine 1–glycine 20 form the signal peptide. Asparagine 79 and asparagine 146 each carry an N-linked (GlcNAc...) asparagine glycan. 3 disulfides stabilise this stretch: cysteine 95-cysteine 363, cysteine 257-cysteine 270, and cysteine 294-cysteine 331. Residue serine 188 is part of the active site. An N-linked (GlcNAc...) asparagine glycan is attached at asparagine 265. A glycan (N-linked (GlcNAc...) asparagine) is linked at asparagine 352. Catalysis depends on residues aspartate 399 and histidine 452.

Belongs to the peptidase S10 family. As to expression, expressed in seedlings, flowers and siliques.

Its subcellular location is the secreted. Probable carboxypeptidase. The polypeptide is Serine carboxypeptidase-like 35 (SCPL35) (Arabidopsis thaliana (Mouse-ear cress)).